The chain runs to 114 residues: Superoxide dismutase [Cu-Zn] (114 aa).

Cu cation contacts are provided by His37, His39, and His54. The interval 48-76 (CMSSGPHFNPRSKEHGAPTDENRHLGDLG) is disordered. Zn(2+)-binding residues include His54, His62, His71, and Asp74. Positions 58–73 (RSKEHGAPTDENRHLG) are enriched in basic and acidic residues. Residue His111 coordinates Cu cation.

The protein belongs to the Cu-Zn superoxide dismutase family. Homodimer. The cofactor is Cu cation. Zn(2+) serves as cofactor.

The protein localises to the cytoplasm. The catalysed reaction is 2 superoxide + 2 H(+) = H2O2 + O2. Destroys radicals which are normally produced within the cells and which are toxic to biological systems. In Drosophila obscura (Fruit fly), this protein is Superoxide dismutase [Cu-Zn].